A 283-amino-acid polypeptide reads, in one-letter code: Protein BASIC PENTACYSTEINE1 (283 aa).

Positions 111-170 are disordered; that stretch reads RFEENPIPPPAPCEEQTGKKRKMRGSIATPTVPKAKKMRKPKEERDVTNNNVQQQQQRVK. A compositionally biased stretch (low complexity) spans 158 to 169; that stretch reads TNNNVQQQQQRV.

It belongs to the BBR/BPC family. As to expression, expressed in seedlings, leaves and pistils. Detected in the base of flowers and tips of carpels, in leaf and sepal vasculature, in young rosette, in the lateral and tip of primary roots, and in the whole ovule.

It localises to the nucleus. Functionally, transcriptional regulator that specifically binds to GA-rich elements (GAGA-repeats) present in regulatory sequences of genes involved in developmental processes. Negatively regulates the homeotic gene AGL11/STK, which controls ovule primordium identity, by a cooperative binding to purine-rich elements present in the regulatory sequence leading to DNA conformational changes. This is Protein BASIC PENTACYSTEINE1 (BPC1) from Arabidopsis thaliana (Mouse-ear cress).